We begin with the raw amino-acid sequence, 616 residues long: 2-[(L-alanin-3-ylcarbamoyl)methyl]-3-(2-aminoethylcarbamoyl)-2-hydroxypropanoate synthase (616 aa).

Belongs to the IucA/IucC family. As to quaternary structure, forms a mixture of monomer and dimer in solution.

The catalysed reaction is 2-[(2-aminoethylcarbamoyl)methyl]-2-hydroxybutanedioate + (S)-2,3-diaminopropanoate + ATP = 2-[(L-alanin-3-ylcarbamoyl)methyl]-3-(2-aminoethylcarbamoyl)-2-hydroxypropanoate + AMP + diphosphate. It functions in the pathway siderophore biosynthesis. In terms of biological role, catalyzes the condensation of L-2,3-diaminopropionic acid (L-Dap) and citryl-diaminoethane to form L-2,3-diaminopropionyl-citryl-diaminoethane, the third step in staphyloferrin B biosynthesis. The polypeptide is 2-[(L-alanin-3-ylcarbamoyl)methyl]-3-(2-aminoethylcarbamoyl)-2-hydroxypropanoate synthase (Staphylococcus aureus (strain NCTC 8325 / PS 47)).